A 305-amino-acid chain; its full sequence is Guanine nucleotide-binding protein subunit beta (305 aa).

WD repeat units follow at residues 19-49 (NKLGKIPDIDISTDGKYLLSASTNDVLLVWD), 61-91 (APSVWIMTCAFSPSTKSIAAGGLNNFCVVYD), 104-133 (GHAGFVSCCKYVDDGHLLTGSGDKTCMFWD), 145-176 (GHEMDIVSLDFLPSNPNLFVTGGCDKLAKLWD), 188-218 (GNTSDINSISFFPSNADFVTGAEDGIARCFD), 231-260 (PSSSPINSVLFSKSGKLLFIAKDKTCEVWD), and 272-302 (GHENRISSLALTSDGTMLATGSWDECVRLWS).

Belongs to the WD repeat G protein beta family. G proteins are composed of 3 units, alpha, beta and gamma. Binding of the beta-gamma subunit complex (git5-git11) to the alpha subunit (gpa2) facilitates interaction with GPCR git3.

The protein resides in the cell membrane. It is found in the cytoplasm. Its subcellular location is the nucleus. Beta subunit of the heterotrimeric guanine nucleotide-binding protein (G protein) involved in glucose-induced cAMP signaling. The beta-gamma subunits (git5-git11) promote binding of the alpha subunit gpa2 to GPCR git3, which senses extracellular glucose, to activate cAMP-PKA signaling and repress sexual development and gluconeogenesis. This chain is Guanine nucleotide-binding protein subunit beta (git5), found in Schizosaccharomyces pombe (strain 972 / ATCC 24843) (Fission yeast).